Reading from the N-terminus, the 295-residue chain is Ribosomal RNA small subunit methyltransferase A (295 aa).

Positions 31, 33, 58, 79, 104, and 129 each coordinate S-adenosyl-L-methionine.

It belongs to the class I-like SAM-binding methyltransferase superfamily. rRNA adenine N(6)-methyltransferase family. RsmA subfamily.

It localises to the cytoplasm. It catalyses the reaction adenosine(1518)/adenosine(1519) in 16S rRNA + 4 S-adenosyl-L-methionine = N(6)-dimethyladenosine(1518)/N(6)-dimethyladenosine(1519) in 16S rRNA + 4 S-adenosyl-L-homocysteine + 4 H(+). Functionally, specifically dimethylates two adjacent adenosines (A1518 and A1519) in the loop of a conserved hairpin near the 3'-end of 16S rRNA in the 30S particle. May play a critical role in biogenesis of 30S subunits. The protein is Ribosomal RNA small subunit methyltransferase A of Leuconostoc citreum (strain KM20).